Here is a 563-residue protein sequence, read N- to C-terminus: Lipase 2 (563 aa).

The first 19 residues, 1–19 (MVSKSLFLAAAVNLAGVLA), serve as a signal peptide directing secretion. Q20 is modified (pyrrolidone carboxylic acid). An intrachain disulfide couples C80 to C124. S236 acts as the Acyl-ester intermediate in catalysis. An intrachain disulfide couples C295 to C307. The N-linked (GlcNAc...) asparagine glycan is linked to N302. Catalysis depends on E373, which acts as the Charge relay system. N383 carries an N-linked (GlcNAc...) asparagine glycan. H482 functions as the Charge relay system in the catalytic mechanism.

Belongs to the type-B carboxylesterase/lipase family. Monomer.

It is found in the secreted. The enzyme catalyses a triacylglycerol + H2O = a diacylglycerol + a fatty acid + H(+). Its function is as follows. Hydrolyzes all ester bonds in triglyceride and displays a high affinity for triolein. For unsaturated substrates having long fatty acyl chains (C18:2 cis-9, cis-12 and C18:3 cis-9, cis-12, cis-15) GCL I shows higher specific activity than GCL II, whereas GCL II shows higher specific activity against saturated substrates having short fatty acid chains (C8, C10, C12 and C14). This is Lipase 2 (LIP2) from Geotrichum candidum (Oospora lactis).